We begin with the raw amino-acid sequence, 356 residues long: Golgi-resident adenosine 3',5'-bisphosphate 3'-phosphatase (356 aa).

M1 carries the N-acetylmethionine modification. The Cytoplasmic segment spans residues 1–12 (MAPMGIRLSPLG). Residues 13–33 (VAVFFLLGLGVLYHLYSGFLA) form a helical membrane-spanning segment. Residues 34–356 (GRFSLFGLGG…KLPDLEKSGH (323 aa)) are Lumenal-facing. The segment at 82 to 104 (VRESNVLHEKSKGKTREGAEDKM) is disordered. The active-site Proton acceptor is the D108. Mg(2+) contacts are provided by E131, D172, L174, and D175. T177 functions as the Proton acceptor in the catalytic mechanism. S240 and H243 together coordinate AMP. N-linked (GlcNAc...) asparagine glycosylation occurs at N257. G266 and K270 together coordinate AMP. Mg(2+) is bound at residue D298.

Belongs to the inositol monophosphatase superfamily. Requires Mg(2+) as cofactor. In terms of processing, contains N-linked glycan resistant to endoglycosydase H.

The protein localises to the golgi apparatus. It localises to the trans-Golgi network membrane. The enzyme catalyses adenosine 3',5'-bisphosphate + H2O = AMP + phosphate. It participates in sulfur metabolism. Strongly inhibited by lithium. Exhibits 3'-nucleotidase activity toward adenosine 3',5'-bisphosphate (PAP), namely hydrolyzes adenosine 3',5'-bisphosphate into adenosine 5'-monophosphate (AMP) and a phosphate. May play a role in the formation of skeletal elements derived through endochondral ossification, possibly by clearing adenosine 3',5'-bisphosphate produced by Golgi sulfotransferases during glycosaminoglycan sulfation. Has no activity toward 3'-phosphoadenosine 5'-phosphosulfate (PAPS) or inositol phosphate (IP) substrates including I(1)P, I(1,4)P2, I(1,3,4)P3, I(1,4,5)P3 and I(1,3,4,5)P4. This chain is Golgi-resident adenosine 3',5'-bisphosphate 3'-phosphatase (Bpnt2), found in Rattus norvegicus (Rat).